We begin with the raw amino-acid sequence, 350 residues long: WUSCHEL-related homeobox 1 (350 aa).

The homeobox; WUS-type DNA-binding region spans 72–136 (MVSSRWNPTP…NHKARERQKR (65 aa)). A disordered region spans residues 283-308 (TNTETCHRNGDDNKDQEQHEDCSNGE).

Belongs to the WUS homeobox family.

Its subcellular location is the nucleus. Its function is as follows. Transcription factor which may be involved in developmental processes. The chain is WUSCHEL-related homeobox 1 (WOX1) from Arabidopsis thaliana (Mouse-ear cress).